The chain runs to 350 residues: DNA-directed RNA polymerase subunit alpha (350 aa).

The segment at 1–226 (MLISQRPTLS…ELFGLARELN (226 aa)) is alpha N-terminal domain (alpha-NTD). The tract at residues 241–350 (ADHIASFALP…NQDYAETEQL (110 aa)) is alpha C-terminal domain (alpha-CTD). The disordered stretch occupies residues 326 to 350 (ATGTWNSDAGYDLEDNQDYAETEQL). Positions 336–350 (YDLEDNQDYAETEQL) are enriched in acidic residues.

This sequence belongs to the RNA polymerase alpha chain family. Homodimer. The RNAP catalytic core consists of 2 alpha, 1 beta, 1 beta' and 1 omega subunit. When a sigma factor is associated with the core the holoenzyme is formed, which can initiate transcription.

It catalyses the reaction RNA(n) + a ribonucleoside 5'-triphosphate = RNA(n+1) + diphosphate. DNA-dependent RNA polymerase catalyzes the transcription of DNA into RNA using the four ribonucleoside triphosphates as substrates. The polypeptide is DNA-directed RNA polymerase subunit alpha (Mycobacterium sp. (strain JLS)).